Here is a 170-residue protein sequence, read N- to C-terminus: Thialysine N-epsilon-acetyltransferase (170 aa).

One can recognise an N-acetyltransferase domain in the interval 4-168; it reads VRIREAKEGD…FQGEATRKLA (165 aa). Residue 27–28 participates in substrate binding; the sequence is FE. An N6-acetyllysine modification is found at Lys-29. A substrate-binding site is contributed by Glu-92. Acetyl-CoA contacts are provided by residues 94–96, 102–107, 133–135, and Tyr-140; these read IYV, GQGIGS, and NQR. Tyr-140 (proton donor) is an active-site residue. Glu-152 provides a ligand contact to substrate.

It belongs to the acetyltransferase family. As to quaternary structure, homodimer. As to expression, widely expressed. Under physiological conditions, SSAT2 is expressed at lower level that SSAT1 (SSAT). Many tissues express only SSAT1, several tissues express both SSAT1 and SSAT2, and bone, cervix, ovary and pineal gland expressed only SSAT2.

Its subcellular location is the cytoplasm. The catalysed reaction is S-(2-aminoethyl)-L-cysteine + acetyl-CoA = S-(2-acetamidoethyl)-L-cysteine + CoA + H(+). The enzyme catalyses an alkane-alpha,omega-diamine + acetyl-CoA = an N-acetylalkane-alpha,omega-diamine + CoA + H(+). Catalyzes the N-acetylation of the amino acid thialysine (S-(2-aminoethyl)-L-cysteine), a L-lysine analog with the 4-methylene group substituted with a sulfur. May also catalyze acetylation of polyamines, such as norspermidine, spermidine or spermine. However, ability to acetylate polyamines is weak, suggesting that it does not act as a diamine acetyltransferase in vivo. In Homo sapiens (Human), this protein is Thialysine N-epsilon-acetyltransferase.